Here is a 260-residue protein sequence, read N- to C-terminus: Adenosylcobinamide-GDP ribazoletransferase (260 aa).

7 helical membrane-spanning segments follow: residues 31–51 (IIFFPFIGFLEGVFCIFLVNI), 55–75 (IFSSSVISIILLVFLFSVRGI), 111–131 (VIGVAGAVALVLDVLCRFAFV), 140–160 (FLIFLFMFCFSRWIVIPLMYY), 177–197 (ISSWQVIISTVLPIFLLVYFT), 202–222 (FIFLPLIALFLFFISYILKKF), and 234–254 (HLGATVEITEIVFLICFLLGE).

Belongs to the CobS family. The cofactor is Mg(2+).

It is found in the cell inner membrane. It catalyses the reaction alpha-ribazole + adenosylcob(III)inamide-GDP = adenosylcob(III)alamin + GMP + H(+). It carries out the reaction alpha-ribazole 5'-phosphate + adenosylcob(III)inamide-GDP = adenosylcob(III)alamin 5'-phosphate + GMP + H(+). It functions in the pathway cofactor biosynthesis; adenosylcobalamin biosynthesis; adenosylcobalamin from cob(II)yrinate a,c-diamide: step 7/7. Joins adenosylcobinamide-GDP and alpha-ribazole to generate adenosylcobalamin (Ado-cobalamin). Also synthesizes adenosylcobalamin 5'-phosphate from adenosylcobinamide-GDP and alpha-ribazole 5'-phosphate. In Thermodesulfovibrio yellowstonii (strain ATCC 51303 / DSM 11347 / YP87), this protein is Adenosylcobinamide-GDP ribazoletransferase.